A 159-amino-acid chain; its full sequence is MKAVCPGSFDPITLGHLDIITRAAAQFEEVTVLVTANPNKNSGLFTVEERMDLIRRSTAHLSNVKVDTWATLLVDYTTAHGIGALVKGLRSSLDYEYELPMAQMNRRLSGVDTFFLLTDEKYGYVSSTLCKEVARYGGDVSGLLPEVVVDAVKQKYTQQ.

Ser8 is a substrate binding site. ATP-binding positions include 8 to 9 (SF) and His16. Substrate-binding residues include Lys40, Leu73, and Lys87. ATP is bound by residues 88–90 (GLR), Glu98, and 122–128 (YGYVSST).

This sequence belongs to the bacterial CoaD family. In terms of assembly, homohexamer. It depends on Mg(2+) as a cofactor.

The protein resides in the cytoplasm. The catalysed reaction is (R)-4'-phosphopantetheine + ATP + H(+) = 3'-dephospho-CoA + diphosphate. The protein operates within cofactor biosynthesis; coenzyme A biosynthesis; CoA from (R)-pantothenate: step 4/5. Functionally, reversibly transfers an adenylyl group from ATP to 4'-phosphopantetheine, yielding dephospho-CoA (dPCoA) and pyrophosphate. The sequence is that of Phosphopantetheine adenylyltransferase from Corynebacterium efficiens (strain DSM 44549 / YS-314 / AJ 12310 / JCM 11189 / NBRC 100395).